Reading from the N-terminus, the 512-residue chain is 2-isopropylmalate synthase (512 aa).

Positions 5 to 268 (LIIFDTTLRD…DVDIETQHIL (264 aa)) constitute a Pyruvate carboxyltransferase domain. Mn(2+) contacts are provided by Asp-14, His-202, His-204, and Asn-239. Positions 394-512 (SFVSLSQHSE…SKADRVAAQG (119 aa)) are regulatory domain.

The protein belongs to the alpha-IPM synthase/homocitrate synthase family. LeuA type 1 subfamily. In terms of assembly, homodimer. It depends on Mn(2+) as a cofactor.

The protein localises to the cytoplasm. The catalysed reaction is 3-methyl-2-oxobutanoate + acetyl-CoA + H2O = (2S)-2-isopropylmalate + CoA + H(+). It participates in amino-acid biosynthesis; L-leucine biosynthesis; L-leucine from 3-methyl-2-oxobutanoate: step 1/4. Functionally, catalyzes the condensation of the acetyl group of acetyl-CoA with 3-methyl-2-oxobutanoate (2-ketoisovalerate) to form 3-carboxy-3-hydroxy-4-methylpentanoate (2-isopropylmalate). The sequence is that of 2-isopropylmalate synthase from Albidiferax ferrireducens (strain ATCC BAA-621 / DSM 15236 / T118) (Rhodoferax ferrireducens).